A 269-amino-acid chain; its full sequence is Lck-interacting transmembrane adapter 1 (269 aa).

The Extracellular portion of the chain corresponds to 1–7 (MRPPVPS). The chain crosses the membrane as a helical; Signal-anchor for type III membrane protein span at residues 8–28 (APLALWVLGCFSLLLWLWALC). 2 S-palmitoyl cysteine lipidation sites follow: Cys-28 and Cys-31. At 29–269 (TACHRKRAQR…VYESIKEMGL (241 aa)) the chain is on the cytoplasmic side. The tract at residues 102 to 133 (STRSQVPNSAFPPRQLPRAPPAAPATAPSTSS) is disordered. The span at 115–124 (RQLPRAPPAA) shows a compositional bias: pro residues. Phosphotyrosine occurs at positions 137, 175, and 207. Residues 137–140 (YSNV) form an interaction with GRB2 region. Interaction with CSK stretches follow at residues 175-178 (YACI) and 207-210 (YSRV). Phosphotyrosine; by LYN or LCK is present on residues Tyr-242 and Tyr-261. The segment at 242–245 (YEAI) is interaction with LCK and PIK3R1. An interaction with LCK, PLCG2 and PIK3R1 region spans residues 261–264 (YESI). A Phosphoserine modification is found at Ser-263.

When phosphorylated in response to TCR stimulation and/or CD4 costimulation, interacts with LCK, CSK, FYN, PTPN11/SHP2, GRB2, PIK3R1 and GRAP2. When phosphorylated in response to BCR activation, interacts with LYN, PIK3R1, PLCG2 and GRB2. Palmitoylation of Cys-28 and Cys-31 is required for raft targeting. In terms of processing, phosphorylated on tyrosines upon TCR activation and/or CD4 coreceptor stimulation, or upon BCR stimulation; which leads to the recruitment of SH2-containing proteins. In terms of tissue distribution, expressed in spleen and lung. Present in primary B-cells and peripheral T-cells (at protein level).

It is found in the cell membrane. Involved in BCR (B-cell antigen receptor)-mediated signaling in B-cells and TCR (T-cell antigen receptor)-mediated T-cell signaling in T-cells. In absence of TCR signaling, may be involved in CD4-mediated inhibition of T-cell activation. Couples activation of these receptors and their associated kinases with distal intracellular events such as calcium mobilization or MAPK activation through the recruitment of PLCG2, GRB2, GRAP2, and other signaling molecules. In Mus musculus (Mouse), this protein is Lck-interacting transmembrane adapter 1 (Lime1).